The sequence spans 310 residues: Membrane protein insertase YidC 2 (310 aa).

The first 23 residues, 1-23, serve as a signal peptide directing secretion; the sequence is MKKIYKRLLFSGLALSMLFFLSG. The N-palmitoyl cysteine moiety is linked to residue C24. The S-diacylglycerol cysteine moiety is linked to residue C24. The next 5 membrane-spanning stretches (helical) occupy residues 34–54, 57–77, 136–156, 180–200, and 220–240; these read GEGWVYKFFAAPMGSVIQYLA, LGLGFGFAIIIVTVIVRLLIL, FGGLGCLPLLIQMPFFSALYI, IITVIIGILYLVQSWVSTLSV, and VMISIGAPAGGALYWLVSGIF. The interval 263–310 is disordered; sequence EFKKNPPKPFKSNARKDITPQANNDKKLITSKKQKSNRNAGKQRHHKQ. Positions 276-290 are enriched in basic and acidic residues; it reads ARKDITPQANNDKKL. The span at 291–310 shows a compositional bias: basic residues; the sequence is ITSKKQKSNRNAGKQRHHKQ.

The protein belongs to the OXA1/ALB3/YidC family. Type 2 subfamily.

The protein resides in the cell membrane. Its function is as follows. Required for the insertion and/or proper folding and/or complex formation of integral membrane proteins into the membrane. Involved in integration of membrane proteins that insert both dependently and independently of the Sec translocase complex, as well as at least some lipoproteins. Partially complements an E.coli yidC depletion experiment. This is Membrane protein insertase YidC 2 (yidC2) from Streptococcus mutans serotype c (strain ATCC 700610 / UA159).